Here is a 368-residue protein sequence, read N- to C-terminus: Phosphoserine aminotransferase (368 aa).

Arg42 contacts L-glutamate. Pyridoxal 5'-phosphate is bound by residues Trp101, Thr151, Asp175, and Gln198. At Lys199 the chain carries N6-(pyridoxal phosphate)lysine. 240–241 contacts pyridoxal 5'-phosphate; that stretch reads NT.

It belongs to the class-V pyridoxal-phosphate-dependent aminotransferase family. SerC subfamily. As to quaternary structure, homodimer. Pyridoxal 5'-phosphate serves as cofactor.

Its subcellular location is the cytoplasm. It catalyses the reaction O-phospho-L-serine + 2-oxoglutarate = 3-phosphooxypyruvate + L-glutamate. The catalysed reaction is 4-(phosphooxy)-L-threonine + 2-oxoglutarate = (R)-3-hydroxy-2-oxo-4-phosphooxybutanoate + L-glutamate. It functions in the pathway amino-acid biosynthesis; L-serine biosynthesis; L-serine from 3-phospho-D-glycerate: step 2/3. Its pathway is cofactor biosynthesis; pyridoxine 5'-phosphate biosynthesis; pyridoxine 5'-phosphate from D-erythrose 4-phosphate: step 3/5. Functionally, catalyzes the reversible conversion of 3-phosphohydroxypyruvate to phosphoserine and of 3-hydroxy-2-oxo-4-phosphonooxybutanoate to phosphohydroxythreonine. The polypeptide is Phosphoserine aminotransferase (Polaromonas sp. (strain JS666 / ATCC BAA-500)).